The following is a 666-amino-acid chain: tRNA 5-methylaminomethyl-2-thiouridine biosynthesis bifunctional protein MnmC (666 aa).

Residues 1 to 245 (MKQYAIQPAN…KREMLCGVMA (245 aa)) are tRNA (mnm(5)s(2)U34)-methyltransferase. The segment at 270–666 (IGGGIASALL…RKLLKGKAVK (397 aa)) is FAD-dependent cmnm(5)s(2)U34 oxidoreductase.

It in the N-terminal section; belongs to the methyltransferase superfamily. tRNA (mnm(5)s(2)U34)-methyltransferase family. In the C-terminal section; belongs to the DAO family. FAD is required as a cofactor.

The protein localises to the cytoplasm. The enzyme catalyses 5-aminomethyl-2-thiouridine(34) in tRNA + S-adenosyl-L-methionine = 5-methylaminomethyl-2-thiouridine(34) in tRNA + S-adenosyl-L-homocysteine + H(+). Its function is as follows. Catalyzes the last two steps in the biosynthesis of 5-methylaminomethyl-2-thiouridine (mnm(5)s(2)U) at the wobble position (U34) in tRNA. Catalyzes the FAD-dependent demodification of cmnm(5)s(2)U34 to nm(5)s(2)U34, followed by the transfer of a methyl group from S-adenosyl-L-methionine to nm(5)s(2)U34, to form mnm(5)s(2)U34. This Citrobacter koseri (strain ATCC BAA-895 / CDC 4225-83 / SGSC4696) protein is tRNA 5-methylaminomethyl-2-thiouridine biosynthesis bifunctional protein MnmC.